A 158-amino-acid chain; its full sequence is Sec-independent protein translocase protein TatB (158 aa).

A helical transmembrane segment spans residues 1-21 (MFGISFSELLLVGLVALLVLG). A disordered region spans residues 73–158 (DEARKMFAPN…HDSSLPPRAP (86 aa)). The segment covering 80-90 (APNQPSENSPE) has biased composition (low complexity).

It belongs to the TatB family. The Tat system comprises two distinct complexes: a TatABC complex, containing multiple copies of TatA, TatB and TatC subunits, and a separate TatA complex, containing only TatA subunits. Substrates initially bind to the TatABC complex, which probably triggers association of the separate TatA complex to form the active translocon.

It is found in the cell inner membrane. Its function is as follows. Part of the twin-arginine translocation (Tat) system that transports large folded proteins containing a characteristic twin-arginine motif in their signal peptide across membranes. Together with TatC, TatB is part of a receptor directly interacting with Tat signal peptides. TatB may form an oligomeric binding site that transiently accommodates folded Tat precursor proteins before their translocation. In Pseudomonas syringae pv. syringae (strain B728a), this protein is Sec-independent protein translocase protein TatB.